The chain runs to 651 residues: Histone-arginine methyltransferase CARM1 (651 aa).

Positions 28–139 (ATVSVFPGAR…GHTLERSVFS (112 aa)) are interaction with C9orf72. Residues 147-454 (AVQYFQFYGY…KRQSYDISIV (308 aa)) enclose the SAM-dependent MTase PRMT-type domain. Glutamine 160, arginine 169, glycine 193, and glutamate 215 together coordinate S-adenosyl-L-methionine. Serine 217 carries the post-translational modification Phosphoserine. Residue lysine 228 forms a Glycyl lysine isopeptide (Lys-Gly) (interchain with G-Cter in ubiquitin) linkage. 2 residues coordinate S-adenosyl-L-methionine: glutamate 244 and serine 272. The segment at 347–380 (RILMAKSVKYTVNFLEAKEGDLHRIEIPFKFHML) is required for nuclear translocation. The tract at residues 500-651 (TGSTYNLSSG…IPTNTMHYGS (152 aa)) is transactivation domain. Arginine 551 carries the post-translational modification Dimethylated arginine. Positions 581-617 (RSSYQWGPGRLRGHAGSSVPMTCPTGSSGAQGGGGSS) are disordered.

This sequence belongs to the class I-like SAM-binding methyltransferase superfamily. Protein arginine N-methyltransferase family. In terms of assembly, homodimer. Interacts with NR1H4. Interacts with SNRPC. Interacts with the C-terminus of NCOA2/GRIP1, NCO3/ACTR and NCOA1/SRC1. Part of a complex consisting of CARM1, EP300/P300 and NCOA2/GRIP1. Interacts with FLII, TP53, myogenic factor MEF2, EP300/P300, TRIM24, CREBBP and CTNNB1. Interacts with RELA. Identified in a complex containing CARM1, TRIM24 and NCOA2/GRIP1. Interacts with NCOA3/SRC3. Interacts with SKP2. Interacts (via PH domain-like fold) with C9orf72. Interacts with PARP1; promoting PARP1 recruimtent to replication forks. Auto-methylated on Arg-551. Methylation enhances transcription coactivator activity. Methylation is required for its role in the regulation of pre-mRNA alternative splicing. Post-translationally, phosphorylation at Ser-217 interferes with S-adenosyl-L-methionine binding and strongly reduces methyltransferase activity. Phosphorylation at Ser-217 is strongly increased during mitosis, and decreases rapidly to a very low, basal level after entry into the G1 phase of the cell cycle. Phosphorylation at Ser-217 may promote location in the cytosol. In terms of processing, ubiquitinated by E3 ubiquitin-protein ligase complex containing FBXO9 at Lys-228; leading to proteasomal degradation. In terms of tissue distribution, isoform 1 is expressed at low levels in brain, liver and testis. As to expression, isoform 2 is highly expressed in brain, liver, skeletal muscle and testis. Isoform 3 is highly expressed in spleen, liver and kidney. In terms of tissue distribution, isoform 4 is expressed in spleen, liver and kidney.

It localises to the nucleus. The protein resides in the cytoplasm. The protein localises to the chromosome. It catalyses the reaction L-arginyl-[protein] + 2 S-adenosyl-L-methionine = N(omega),N(omega)-dimethyl-L-arginyl-[protein] + 2 S-adenosyl-L-homocysteine + 2 H(+). Its activity is regulated as follows. Methylation of H3R17 (H3R17me) by CARM1 is stimulated by preacetylation of H3 'Lys-18' (H3K18ac) H3 'Lys-23' (H3K23ac) by EP300 and blocked by citrullination of H3 'Arg-17' (H3R17ci) by PADI4. Functionally, methylates (mono- and asymmetric dimethylation) the guanidino nitrogens of arginyl residues in several proteins involved in DNA packaging, transcription regulation, pre-mRNA splicing, and mRNA stability. Recruited to promoters upon gene activation together with histone acetyltransferases from EP300/P300 and p160 families, methylates histone H3 at 'Arg-17' (H3R17me), forming mainly asymmetric dimethylarginine (H3R17me2a), leading to activation of transcription via chromatin remodeling. During nuclear hormone receptor activation and TCF7L2/TCF4 activation, acts synergically with EP300/P300 and either one of the p160 histone acetyltransferases NCOA1/SRC1, NCOA2/GRIP1 and NCOA3/ACTR or CTNNB1/beta-catenin to activate transcription. During myogenic transcriptional activation, acts together with NCOA3/ACTR as a coactivator for MEF2C. During monocyte inflammatory stimulation, acts together with EP300/P300 as a coactivator for NF-kappa-B. Acts as a coactivator for PPARG, promotes adipocyte differentiation and the accumulation of brown fat tissue. Plays a role in the regulation of pre-mRNA alternative splicing by methylation of splicing factors. Also seems to be involved in p53/TP53 transcriptional activation. Methylates EP300/P300, both at 'Arg-2142', which may loosen its interaction with NCOA2/GRIP1, and at 'Arg-580' and 'Arg-604' in the KIX domain, which impairs its interaction with CREB and inhibits CREB-dependent transcriptional activation. Also methylates arginine residues in RNA-binding proteins PABPC1, ELAVL1 and ELAV4, which may affect their mRNA-stabilizing properties and the half-life of their target mRNAs. Acts as a transcriptional coactivator of ACACA/acetyl-CoA carboxylase by enriching H3R17 methylation at its promoter, thereby positively regulating fatty acid synthesis. Independently of its methyltransferase activity, involved in replication fork progression: promotes PARP1 recruitment to replication forks, leading to poly-ADP-ribosylation of chromatin at replication forks and reduced fork speed. In terms of biological role, isoform 3 specifically affects pre-mRNA splicing. This activity is independent from methyltransferase activity. The sequence is that of Histone-arginine methyltransferase CARM1 (Carm1) from Rattus norvegicus (Rat).